We begin with the raw amino-acid sequence, 127 residues long: NADPH-dependent 7-cyano-7-deazaguanine reductase (127 aa).

C40 acts as the Thioimide intermediate in catalysis. The Proton donor role is filled by D47. Residues 62–64 (VEL) and 81–82 (HE) each bind substrate.

The protein belongs to the GTP cyclohydrolase I family. QueF type 1 subfamily.

The protein resides in the cytoplasm. It carries out the reaction 7-aminomethyl-7-carbaguanine + 2 NADP(+) = 7-cyano-7-deazaguanine + 2 NADPH + 3 H(+). It participates in tRNA modification; tRNA-queuosine biosynthesis. Its function is as follows. Catalyzes the NADPH-dependent reduction of 7-cyano-7-deazaguanine (preQ0) to 7-aminomethyl-7-deazaguanine (preQ1). This is NADPH-dependent 7-cyano-7-deazaguanine reductase from Campylobacter jejuni subsp. jejuni serotype O:6 (strain 81116 / NCTC 11828).